The primary structure comprises 522 residues: Leucine-rich repeat transmembrane neuronal protein 1 (522 aa).

Positions 1-34 are cleaved as a signal peptide; the sequence is MDFLLLGLCLYWLLRRPSGVVLCLLGACFQMLPA. The LRRNT domain maps to 35–63; it reads APSGCPQLCRCEGRLLYCEALNPTEAPHN. The Extracellular portion of the chain corresponds to 35–427; the sequence is APSGCPQLCR…HAENAVQIHK (393 aa). N-linked (GlcNAc...) asparagine glycosylation occurs at N63. LRR repeat units lie at residues 64 to 87, 89 to 111, 112 to 135, 137 to 159, 161 to 183, 184 to 207, 209 to 231, 233 to 255, 256 to 278, and 279 to 302; these read LSGLLGLSLRYNSLSELRAGQFTG, MQLTWLYLDHNHICSVQGDAFQK, LRRVKELTLSSNQITQLPNTTFRP, PNLRSVDLSYNKLQALAPDLFHG, RKLTTLHMRANAIQFVPVRIFQD, CRSLKFLDIGYNQLKSLARNSFAG, FKLTELHLEHNDLVKVNFAHFPR, ISLHSLCLRRNKVAIVVSSLDWV, WNLKKMDLSGNEIEYMEPHVFET, and VPHLQSLQLDSNRLTYIEPRILNS. The N-linked (GlcNAc...) asparagine glycan is linked to N130. One can recognise an LRRCT domain in the interval 314-365; that stretch reads NLWDCGRNVCALASWLSNFQGRYDGNLQCASPEYAQGEDVLDAVYAFHLCED. An N-linked (GlcNAc...) asparagine glycan is attached at N380. A disordered region spans residues 382–401; sequence SDLGPPASSATTLADGGEGQ. A helical membrane pass occupies residues 428 to 448; it reads VVTGTMALIFSFLIVVLVLYV. The Cytoplasmic portion of the chain corresponds to 449-522; it reads SWKCFPASLR…HQQPARECEV (74 aa).

The protein belongs to the LRRTM family.

The protein localises to the cell membrane. The protein resides in the postsynaptic cell membrane. In terms of biological role, exhibits strong synaptogenic activity, restricted to excitatory presynaptic differentiation, acting at both pre- and postsynaptic level. The chain is Leucine-rich repeat transmembrane neuronal protein 1 (LRRTM1) from Pongo abelii (Sumatran orangutan).